The primary structure comprises 232 residues: 7-cyano-7-deazaguanine synthase (232 aa).

Residue 7–17 participates in ATP binding; that stretch reads CSGGLDSVSLA. Zn(2+) is bound by residues Cys185, Cys193, Cys196, and Cys199.

The protein belongs to the QueC family. Zn(2+) is required as a cofactor.

The enzyme catalyses 7-carboxy-7-deazaguanine + NH4(+) + ATP = 7-cyano-7-deazaguanine + ADP + phosphate + H2O + H(+). It participates in purine metabolism; 7-cyano-7-deazaguanine biosynthesis. Catalyzes the ATP-dependent conversion of 7-carboxy-7-deazaguanine (CDG) to 7-cyano-7-deazaguanine (preQ(0)). This chain is 7-cyano-7-deazaguanine synthase, found in Brucella anthropi (strain ATCC 49188 / DSM 6882 / CCUG 24695 / JCM 21032 / LMG 3331 / NBRC 15819 / NCTC 12168 / Alc 37) (Ochrobactrum anthropi).